A 33-amino-acid polypeptide reads, in one-letter code: Fatty acid-binding protein, intestinal (33 aa).

It belongs to the calycin superfamily. Fatty-acid binding protein (FABP) family. In terms of tissue distribution, intestine.

It is found in the cytoplasm. FABPs are thought to play a role in the intracellular transport of long-chain fatty acids and their acyl-CoA esters. This is Fatty acid-binding protein, intestinal (fabp2) from Rhamdia sapo (South American catfish).